We begin with the raw amino-acid sequence, 513 residues long: Cytochrome P450 monooxygenase eqxH (513 aa).

The helical transmembrane segment at 13–32 (QYAILCGITVFTLFIVQLSL) threads the bilayer. N-linked (GlcNAc...) asparagine glycosylation is found at N130 and N295. C449 is a heme binding site.

This sequence belongs to the cytochrome P450 family. Heme serves as cofactor.

Its subcellular location is the membrane. The protein operates within mycotoxin biosynthesis. Cytochrome P450 monooxygenase; part of the gene cluster that mediates the biosynthesis of equisetin, a trans-fused decalin-containing tetramic acid with antimicrobial activity. The PKS module of eqxS together with the enoylreductase eqxC catalyze the formation of the polyketide unit which is then conjugated to L-serine by the condensation domain of the eqxS NRPS module. Activity of the Dieckmann cyclase domain (RED) results in release of the Dieckmann product intermediate. Diels-Alderase eqx3 is involved in endo-selective Diels-Alder cycloaddition to form the decalin ring, leading to the production of N-desmethylequisetin also called trichosetin. Subsequent N-methylation is carried out by eqxD to give equisetin. The polypeptide is Cytochrome P450 monooxygenase eqxH (Fusarium heterosporum).